The sequence spans 103 residues: Small ribosomal subunit protein uS10 (103 aa).

Belongs to the universal ribosomal protein uS10 family. Part of the 30S ribosomal subunit.

Its function is as follows. Involved in the binding of tRNA to the ribosomes. This chain is Small ribosomal subunit protein uS10, found in Shewanella baltica (strain OS223).